A 121-amino-acid polypeptide reads, in one-letter code: Large ribosomal subunit protein uL14 (121 aa).

The protein belongs to the universal ribosomal protein uL14 family. Part of the 50S ribosomal subunit. Forms a cluster with proteins L3 and L19. In the 70S ribosome, L14 and L19 interact and together make contacts with the 16S rRNA in bridges B5 and B8.

Functionally, binds to 23S rRNA. Forms part of two intersubunit bridges in the 70S ribosome. In Prochlorococcus marinus (strain NATL1A), this protein is Large ribosomal subunit protein uL14.